Reading from the N-terminus, the 271-residue chain is Type III pantothenate kinase (271 aa).

5-12 (DISNSVTK) contributes to the ATP binding site. Substrate is bound by residues Y85 and 92 to 95 (GADR). D94 serves as the catalytic Proton acceptor. D114 contacts K(+). T117 provides a ligand contact to ATP. Residue T169 coordinates substrate.

The protein belongs to the type III pantothenate kinase family. Homodimer. NH4(+) serves as cofactor. Requires K(+) as cofactor.

The protein localises to the cytoplasm. The catalysed reaction is (R)-pantothenate + ATP = (R)-4'-phosphopantothenate + ADP + H(+). The protein operates within cofactor biosynthesis; coenzyme A biosynthesis; CoA from (R)-pantothenate: step 1/5. In terms of biological role, catalyzes the phosphorylation of pantothenate (Pan), the first step in CoA biosynthesis. In Methylacidiphilum infernorum (isolate V4) (Methylokorus infernorum (strain V4)), this protein is Type III pantothenate kinase.